The chain runs to 472 residues: Succinate-semialdehyde dehydrogenase [NADP(+)] (472 aa).

NADP(+) contacts are provided by residues 134 to 135, 158 to 161, and 210 to 211; these read WN, KHAS, and GS. E232 serves as the catalytic Proton acceptor. L233 lines the NADP(+) pocket. C266 serves as the catalytic Nucleophile. Residue E363 coordinates NADP(+).

Belongs to the aldehyde dehydrogenase family.

It carries out the reaction succinate semialdehyde + NADP(+) + H2O = succinate + NADPH + 2 H(+). Its function is as follows. Catalyzes the NADP(+)-dependent oxidation of succinate semialdehyde to succinate. It is believed to be the main source of succinate semialdehyde dehydrogenase activity in Mycobacterium. This Mycolicibacterium paratuberculosis (strain ATCC BAA-968 / K-10) (Mycobacterium paratuberculosis) protein is Succinate-semialdehyde dehydrogenase [NADP(+)] (gabD1).